Consider the following 85-residue polypeptide: Elongation factor 1-beta (85 aa).

Belongs to the EF-1-beta/EF-1-delta family.

Functionally, promotes the exchange of GDP for GTP in EF-1-alpha/GDP, thus allowing the regeneration of EF-1-alpha/GTP that could then be used to form the ternary complex EF-1-alpha/GTP/AAtRNA. The sequence is that of Elongation factor 1-beta from Methanosphaerula palustris (strain ATCC BAA-1556 / DSM 19958 / E1-9c).